The chain runs to 452 residues: Pup--protein ligase (452 aa).

Glu9 is a Mg(2+) binding site. Position 53 (Arg53) interacts with ATP. Residue Tyr55 participates in Mg(2+) binding. Residue Asp57 is the Proton acceptor of the active site. Glu63 is a binding site for Mg(2+). 2 residues coordinate ATP: Thr66 and Trp419.

This sequence belongs to the Pup ligase/Pup deamidase family. Pup-conjugating enzyme subfamily.

It catalyses the reaction ATP + [prokaryotic ubiquitin-like protein]-L-glutamate + [protein]-L-lysine = ADP + phosphate + N(6)-([prokaryotic ubiquitin-like protein]-gamma-L-glutamyl)-[protein]-L-lysine.. Its pathway is protein degradation; proteasomal Pup-dependent pathway. It functions in the pathway protein modification; protein pupylation. In terms of biological role, catalyzes the covalent attachment of the prokaryotic ubiquitin-like protein modifier Pup to the proteasomal substrate proteins, thereby targeting them for proteasomal degradation. This tagging system is termed pupylation. The ligation reaction involves the side-chain carboxylate of the C-terminal glutamate of Pup and the side-chain amino group of a substrate lysine. The polypeptide is Pup--protein ligase (Thermobifida fusca (strain YX)).